We begin with the raw amino-acid sequence, 262 residues long: Phosphatidylglycerol--prolipoprotein diacylglyceryl transferase (262 aa).

4 consecutive transmembrane segments (helical) span residues 9 to 29, 41 to 61, 80 to 100, and 109 to 129; these read LGPL…ILAV, IIPD…ILGA, IFAI…GALV, and LINT…AQSL. Arg-131 contacts a 1,2-diacyl-sn-glycero-3-phospho-(1'-sn-glycerol). The next 3 helical transmembrane spans lie at 167 to 187, 197 to 217, and 226 to 246; these read QPTF…ILIF, GHIT…IEGM, and GLRV…MIVI.

This sequence belongs to the Lgt family.

The protein localises to the cell membrane. It carries out the reaction L-cysteinyl-[prolipoprotein] + a 1,2-diacyl-sn-glycero-3-phospho-(1'-sn-glycerol) = an S-1,2-diacyl-sn-glyceryl-L-cysteinyl-[prolipoprotein] + sn-glycerol 1-phosphate + H(+). It participates in protein modification; lipoprotein biosynthesis (diacylglyceryl transfer). Functionally, catalyzes the transfer of the diacylglyceryl group from phosphatidylglycerol to the sulfhydryl group of the N-terminal cysteine of a prolipoprotein, the first step in the formation of mature lipoproteins. This chain is Phosphatidylglycerol--prolipoprotein diacylglyceryl transferase, found in Streptococcus pneumoniae (strain P1031).